We begin with the raw amino-acid sequence, 176 residues long: Lipoprotein signal peptidase (176 aa).

A run of 3 helical transmembrane segments spans residues Trp12 to Thr32, Trp67 to Leu87, and Val94 to Asp114. Residues Asp123 and Asp141 contribute to the active site. A helical membrane pass occupies residues His133–Leu153.

The protein belongs to the peptidase A8 family.

The protein resides in the cell inner membrane. The enzyme catalyses Release of signal peptides from bacterial membrane prolipoproteins. Hydrolyzes -Xaa-Yaa-Zaa-|-(S,diacylglyceryl)Cys-, in which Xaa is hydrophobic (preferably Leu), and Yaa (Ala or Ser) and Zaa (Gly or Ala) have small, neutral side chains.. The protein operates within protein modification; lipoprotein biosynthesis (signal peptide cleavage). Functionally, this protein specifically catalyzes the removal of signal peptides from prolipoproteins. The protein is Lipoprotein signal peptidase of Shewanella sediminis (strain HAW-EB3).